The chain runs to 381 residues: Beta-lactamase (381 aa).

An N-terminal signal peptide occupies residues 1 to 20 (MMRKSLCCALLLGISCSALA). Ser-84 functions as the Acyl-ester intermediate in the catalytic mechanism. The active-site Proton acceptor is Tyr-170. 335–337 (KTG) contacts substrate.

It belongs to the class-C beta-lactamase family.

Its subcellular location is the periplasm. It catalyses the reaction a beta-lactam + H2O = a substituted beta-amino acid. This protein is a serine beta-lactamase with a substrate specificity for cephalosporins. This Enterobacter cloacae protein is Beta-lactamase (ampC).